A 138-amino-acid polypeptide reads, in one-letter code: ATP synthase epsilon chain (138 aa).

This sequence belongs to the ATPase epsilon chain family. F-type ATPases have 2 components, CF(1) - the catalytic core - and CF(0) - the membrane proton channel. CF(1) has five subunits: alpha(3), beta(3), gamma(1), delta(1), epsilon(1). CF(0) has three main subunits: a, b and c.

It localises to the cell membrane. Produces ATP from ADP in the presence of a proton gradient across the membrane. The chain is ATP synthase epsilon chain from Streptococcus uberis (strain ATCC BAA-854 / 0140J).